The following is a 381-amino-acid chain: Cytochrome b (381 aa).

The next 4 membrane-spanning stretches (helical) occupy residues 38–58 (FGSLLGLCLLIQIVIGLFLAM), 82–103 (WLLRTVHANGASFFFICIYFHI), 118–138 (WMTGIALLFLVMAAAFLGYVL), and 183–203 (FFTFHFLIPFLVAGLTMIHLL). His-88 and His-102 together coordinate heme b. Heme b contacts are provided by His-187 and His-201. His-206 is a binding site for a ubiquinone. 4 helical membrane-spanning segments follow: residues 231 to 251 (IKDTVGFMVLIFFLVTLSLTS), 293 to 313 (LGGVIALVSSILILVSLPFTF), 325 to 345 (VAQPLFWSWVSVFLLLTWIGA), and 352 to 372 (YNFLGQILTCAYFSYFVFTPI).

The protein belongs to the cytochrome b family. The main subunits of complex b-c1 are: cytochrome b, cytochrome c1 and the Rieske protein. Heme b serves as cofactor.

The protein localises to the mitochondrion inner membrane. Its function is as follows. Component of the ubiquinol-cytochrome c reductase complex (complex III or cytochrome b-c1 complex) that is part of the mitochondrial respiratory chain. The b-c1 complex mediates electron transfer from ubiquinol to cytochrome c. Contributes to the generation of a proton gradient across the mitochondrial membrane that is then used for ATP synthesis. This chain is Cytochrome b (MT-CYB), found in Artemia franciscana (Brine shrimp).